The primary structure comprises 361 residues: D-alanine--D-alanine ligase (361 aa).

The ATP-grasp domain maps to 140–345; it reads KHLFAQAGLD…YAELIEKLVA (206 aa). 173-228 is a binding site for ATP; the sequence is EGELGYPCFVKPANLGSSVGISKCRSREELDQAFELAFQYDRKIVVEEGVIGREIE. Positions 299, 312, and 314 each coordinate Mg(2+).

It belongs to the D-alanine--D-alanine ligase family. The cofactor is Mg(2+). Requires Mn(2+) as cofactor.

Its subcellular location is the cytoplasm. It catalyses the reaction 2 D-alanine + ATP = D-alanyl-D-alanine + ADP + phosphate + H(+). Its pathway is cell wall biogenesis; peptidoglycan biosynthesis. Functionally, cell wall formation. The protein is D-alanine--D-alanine ligase of Bacillus licheniformis (strain ATCC 14580 / DSM 13 / JCM 2505 / CCUG 7422 / NBRC 12200 / NCIMB 9375 / NCTC 10341 / NRRL NRS-1264 / Gibson 46).